We begin with the raw amino-acid sequence, 249 residues long: Putative type I specificity subunit S.MpnORF615P (249 aa).

Belongs to the type-I restriction system S methylase family. As to quaternary structure, the methyltransferase is composed of M and S polypeptides.

Functionally, the specificity (S) subunit of a type I methyltransferase (MTase); this subunit dictates DNA sequence specificity. The single R subunit has multiple frameshifts and is probably not expressed. In Mycoplasma pneumoniae (strain ATCC 29342 / M129 / Subtype 1) (Mycoplasmoides pneumoniae), this protein is Putative type I specificity subunit S.MpnORF615P.